A 934-amino-acid chain; its full sequence is MTKNKKEFTEAPVNFGANLGLMLDLYDDYLQDPSSVPEDLQVLFSTIKTGEAHIEAKPTTDGGGSQAGDSTIKRVMRLIDNIRQYGHLKADIYPVNPPERQNVPKLEIEDFDLDKETLEKISSGIVSEHFKDIYDNAYDAIVRMERRYKGPIAFEYTHINNNKERVWLKRRIETPYKASLNDNQKKELFKKLAHVEGFEKYLHKNFVGAKRFSIEGVDTLVPMLQHTITLAGNEGIKNIQIGMAHRGRLNVLTHVLEKPYEMMISEFMHTDPMKFLPEDGSLELTSGWTSDVKYHLGGVKTTNSYGIEQRISLANNPSHLEIVAPVVAGKTRAAQDNTHQVGGPSTDFHKAMPIIIHGDAAYPGQGINFETMNLGSLKGYSTGGSLHIITNNRIGFTTEPFDGRSTTYSSDVAKGYDVPILHVNADDVEATIEAIEIAMEFRKEFHKDVVIDLVGYRRYGHNEMDEPSITNPVPYQNIRKHDSVEILYGKKLVDEGIISEDEMNEVIDSVQKEMRTAHDKIDKNDKMNNPDMEKPESLQLPLQSDTKDFSFDHLKEINDAMLDYPKDFHVLKKLNKVLEKRREPFEKEGGLVDWAQAEQLAFATILQDGTSIRLTGQDSERGTFSHRHAVLHDEENGNTFTPLHHVPQQQATFDIHNSPLSEAAVVGFEYGYNVENKGNFNIWEAQYGDFSNMSQMMFDNFLSSSRAKWGERSGLTLFLPHAFEGQGPEHSSARLERFLQLAAENNSTVVNLSSASNYFHLLRAQAASLDTLEMRPLIVMSPKSLLRNKTVAKPIDEFTSGGFKPIITEDIDEQKVKKVILASGKMYIDLKEYLAKNPNDSILLIAVERLYPFPEEEIKEVLKSLPHLENVSWVQEEPKNQGAWLFVYPYLKALVANKYDLTYHGRIQRAAPAEGDGEIHKLVQTKIIESSINN.

The protein belongs to the alpha-ketoglutarate dehydrogenase family. As to quaternary structure, homodimer. Part of the 2-oxoglutarate dehydrogenase (OGDH) complex composed of E1 (2-oxoglutarate dehydrogenase), E2 (dihydrolipoamide succinyltransferase) and E3 (dihydrolipoamide dehydrogenase); the complex contains multiple copies of the three enzymatic components (E1, E2 and E3). Thiamine diphosphate is required as a cofactor.

The catalysed reaction is N(6)-[(R)-lipoyl]-L-lysyl-[protein] + 2-oxoglutarate + H(+) = N(6)-[(R)-S(8)-succinyldihydrolipoyl]-L-lysyl-[protein] + CO2. Its function is as follows. E1 component of the 2-oxoglutarate dehydrogenase (OGDH) complex which catalyzes the decarboxylation of 2-oxoglutarate, the first step in the conversion of 2-oxoglutarate to succinyl-CoA and CO(2). The polypeptide is 2-oxoglutarate dehydrogenase E1 component (Staphylococcus epidermidis (strain ATCC 35984 / DSM 28319 / BCRC 17069 / CCUG 31568 / BM 3577 / RP62A)).